A 446-amino-acid chain; its full sequence is Oxysterols receptor LXR-beta (446 aa).

Positions 1 to 69 (MSSPTSSLDT…PERKRKKGPA (69 aa)) are disordered. The interval 1–76 (MSSPTSSLDT…GPAPKMLGHE (76 aa)) is transactivation AF-1; required for ligand-independent transactivation function. Low complexity predominate over residues 17–28 (SPQPSTSATSPT). A DNA-binding region (nuclear receptor) is located at residues 75 to 152 (HELCRVCGDK…AGMREQCVLS (78 aa)). NR C4-type zinc fingers lie at residues 78–98 (CRVC…CEGC) and 116–140 (CRGS…LRKC). The interval 159–201 (KRIQKQQQQQPPPPSEPAASSSGRPAASPGTSEASSQGSGEGE) is disordered. Residues 175-196 (PAASSSGRPAASPGTSEASSQG) show a composition bias toward low complexity. A transactivation AF-2; required for ligand-dependent transactivation function; mediates interaction with CCAR2 region spans residues 205-446 (LTAAQELMIQ…LLSEIWDVHE (242 aa)). The NR LBD domain occupies 208–446 (AQELMIQQLV…LLSEIWDVHE (239 aa)). Glycyl lysine isopeptide (Lys-Gly) (interchain with G-Cter in SUMO2) cross-links involve residues Lys395 and Lys433.

Belongs to the nuclear hormone receptor family. NR1 subfamily. As to quaternary structure, forms a heterodimer with RXR. Interacts with CCAR2 (via N-terminus) in a ligand-independent manner. Interacts (when sumoylated) with GPS2; interaction with GPS2 onto hepatic acute phase protein promoters prevents N-Cor corepressor complex dissociation. Interacts with ABCA12 and ABCA1; this interaction is required for ABCA1 localization to the cell surface and is necessary for its normal activity and stability. Sumoylated by SUMO2 at Lys-395 and Lys-433 during the hepatic acute phase response, leading to promote interaction with GPS2 and prevent N-Cor corepressor complex dissociation. In terms of tissue distribution, ubiquitous.

It is found in the nucleus. Functionally, nuclear receptor that exhibits a ligand-dependent transcriptional activation activity. Binds preferentially to double-stranded oligonucleotide direct repeats having the consensus half-site sequence 5'-AGGTCA-3' and 4-nt spacing (DR-4). Regulates cholesterol uptake through MYLIP-dependent ubiquitination of LDLR, VLDLR and LRP8; DLDLR and LRP8. Interplays functionally with RORA for the regulation of genes involved in liver metabolism. Induces LPCAT3-dependent phospholipid remodeling in endoplasmic reticulum (ER) membranes of hepatocytes, driving SREBF1 processing and lipogenesis. Via LPCAT3, triggers the incorporation of arachidonate into phosphatidylcholines of ER membranes, increasing membrane dynamics and enabling triacylglycerols transfer to nascent very low-density lipoprotein (VLDL) particles. Via LPCAT3 also counteracts lipid-induced ER stress response and inflammation, likely by modulating SRC kinase membrane compartmentalization and limiting the synthesis of lipid inflammatory mediators. Plays an anti-inflammatory role during the hepatic acute phase response by acting as a corepressor: inhibits the hepatic acute phase response by preventing dissociation of the N-Cor corepressor complex. In Mus musculus (Mouse), this protein is Oxysterols receptor LXR-beta (Nr1h2).